Consider the following 160-residue polypeptide: Ureidoglycolate lyase (160 aa).

It belongs to the ureidoglycolate lyase family. As to quaternary structure, homodimer. It depends on Ni(2+) as a cofactor.

It carries out the reaction (S)-ureidoglycolate = urea + glyoxylate. Its pathway is nitrogen metabolism; (S)-allantoin degradation. Catalyzes the catabolism of the allantoin degradation intermediate (S)-ureidoglycolate, generating urea and glyoxylate. Involved in the utilization of allantoin as nitrogen source. The polypeptide is Ureidoglycolate lyase (Salmonella agona (strain SL483)).